An 82-amino-acid chain; its full sequence is Cytochrome b-c1 complex subunit 8 (82 aa).

Residues 2-39 (GRQFGHLTRVRHVITYSLSPFEQRAFPHYFSKGIPNVL) are Mitochondrial matrix-facing. K33 carries the post-translational modification N6-acetyllysine; alternate. At K33 the chain carries N6-succinyllysine; alternate. Residues 40-68 (RRTRACILRVAPPFVAFYLVYTWGTQEFE) traverse the membrane as a helical segment. Topologically, residues 69–82 (KSKRKNPAAYENDR) are mitochondrial intermembrane.

Belongs to the UQCRQ/QCR8 family. As to quaternary structure, component of the ubiquinol-cytochrome c oxidoreductase (cytochrome b-c1 complex, complex III, CIII), a multisubunit enzyme composed of 11 subunits. The complex is composed of 3 respiratory subunits cytochrome b, cytochrome c1 and Rieske protein UQCRFS1, 2 core protein subunits UQCRC1/QCR1 and UQCRC2/QCR2, and 6 low-molecular weight protein subunits UQCRH/QCR6, UQCRB/QCR7, UQCRQ/QCR8, UQCR10/QCR9, UQCR11/QCR10 and subunit 9, the cleavage product of Rieske protein UQCRFS1. The complex exists as an obligatory dimer and forms supercomplexes (SCs) in the inner mitochondrial membrane with NADH-ubiquinone oxidoreductase (complex I, CI) and cytochrome c oxidase (complex IV, CIV), resulting in different assemblies (supercomplex SCI(1)III(2)IV(1) and megacomplex MCI(2)III(2)IV(2)). Interacts with UQCC6.

Its subcellular location is the mitochondrion inner membrane. Functionally, component of the ubiquinol-cytochrome c oxidoreductase, a multisubunit transmembrane complex that is part of the mitochondrial electron transport chain which drives oxidative phosphorylation. The respiratory chain contains 3 multisubunit complexes succinate dehydrogenase (complex II, CII), ubiquinol-cytochrome c oxidoreductase (cytochrome b-c1 complex, complex III, CIII) and cytochrome c oxidase (complex IV, CIV), that cooperate to transfer electrons derived from NADH and succinate to molecular oxygen, creating an electrochemical gradient over the inner membrane that drives transmembrane transport and the ATP synthase. The cytochrome b-c1 complex catalyzes electron transfer from ubiquinol to cytochrome c, linking this redox reaction to translocation of protons across the mitochondrial inner membrane, with protons being carried across the membrane as hydrogens on the quinol. In the process called Q cycle, 2 protons are consumed from the matrix, 4 protons are released into the intermembrane space and 2 electrons are passed to cytochrome c. The sequence is that of Cytochrome b-c1 complex subunit 8 (UQCRQ) from Bos taurus (Bovine).